We begin with the raw amino-acid sequence, 201 residues long: 3-isopropylmalate dehydratase small subunit (201 aa).

It belongs to the LeuD family. LeuD type 1 subfamily. In terms of assembly, heterodimer of LeuC and LeuD.

It carries out the reaction (2R,3S)-3-isopropylmalate = (2S)-2-isopropylmalate. The protein operates within amino-acid biosynthesis; L-leucine biosynthesis; L-leucine from 3-methyl-2-oxobutanoate: step 2/4. Catalyzes the isomerization between 2-isopropylmalate and 3-isopropylmalate, via the formation of 2-isopropylmaleate. The sequence is that of 3-isopropylmalate dehydratase small subunit from Shewanella baltica (strain OS223).